The following is a 192-amino-acid chain: Adenylate kinase (192 aa).

10 to 18 (GVPGVGSTT) is a binding site for ATP.

The protein belongs to the archaeal adenylate kinase family. In terms of assembly, monomer.

The protein resides in the cytoplasm. It catalyses the reaction AMP + ATP = 2 ADP. The sequence is that of Adenylate kinase (adkA) from Methanocaldococcus jannaschii (strain ATCC 43067 / DSM 2661 / JAL-1 / JCM 10045 / NBRC 100440) (Methanococcus jannaschii).